The primary structure comprises 317 residues: E3 ubiquitin-protein ligase NRDP1 (317 aa).

The RING-type; degenerate zinc-finger motif lies at 18-57 (CPICSGVLEEPVQAPHCEHAFCNACITQWFSQQQTCPVDR). Residues 135–175 (IKHLRSVVQQQQIRIGELEKTAAESKHQLSEQKRDIQLLKA) are a coiled coil.

It catalyses the reaction S-ubiquitinyl-[E2 ubiquitin-conjugating enzyme]-L-cysteine + [acceptor protein]-L-lysine = [E2 ubiquitin-conjugating enzyme]-L-cysteine + N(6)-ubiquitinyl-[acceptor protein]-L-lysine.. It functions in the pathway protein modification; protein ubiquitination. In terms of biological role, acts as E3 ubiquitin-protein ligase and regulates the degradation of target proteins. This chain is E3 ubiquitin-protein ligase NRDP1 (rnf41), found in Xenopus laevis (African clawed frog).